The sequence spans 344 residues: Putative esterase NocK (344 aa).

Positions 1–34 (MIGVTRRSGLALAVLVSSAACAGAEPVAPPPAPA) form a signal peptide, tat-type signal. Residues 265–295 (GGADERRREEARPAAAPGGTSTSRETCANPD) are disordered. Residues 266 to 276 (GADERRREEAR) are compositionally biased toward basic and acidic residues.

It belongs to the AB hydrolase superfamily. Predicted to be exported by the Tat system. The position of the signal peptide cleavage has not been experimentally proven.

The polypeptide is Putative esterase NocK (Nocardia uniformis subsp. tsuyamanensis).